We begin with the raw amino-acid sequence, 84 residues long: Exodeoxyribonuclease 7 small subunit (84 aa).

Belongs to the XseB family. Heterooligomer composed of large and small subunits.

It is found in the cytoplasm. It catalyses the reaction Exonucleolytic cleavage in either 5'- to 3'- or 3'- to 5'-direction to yield nucleoside 5'-phosphates.. Its function is as follows. Bidirectionally degrades single-stranded DNA into large acid-insoluble oligonucleotides, which are then degraded further into small acid-soluble oligonucleotides. The polypeptide is Exodeoxyribonuclease 7 small subunit (Bacillus velezensis (strain DSM 23117 / BGSC 10A6 / LMG 26770 / FZB42) (Bacillus amyloliquefaciens subsp. plantarum)).